The chain runs to 245 residues: tRNA (guanine-N(1)-)-methyltransferase (245 aa).

Residues Gly-113 and 133–138 contribute to the S-adenosyl-L-methionine site; that span reads IGDYVL.

Belongs to the RNA methyltransferase TrmD family. In terms of assembly, homodimer.

The protein localises to the cytoplasm. It catalyses the reaction guanosine(37) in tRNA + S-adenosyl-L-methionine = N(1)-methylguanosine(37) in tRNA + S-adenosyl-L-homocysteine + H(+). Specifically methylates guanosine-37 in various tRNAs. The sequence is that of tRNA (guanine-N(1)-)-methyltransferase from Histophilus somni (strain 129Pt) (Haemophilus somnus).